Reading from the N-terminus, the 228-residue chain is ATP synthase F(0) complex subunit a (228 aa).

5 consecutive transmembrane segments (helical) span residues 13 to 33 (NILA…IFPM), 69 to 89 (WALI…LGLL), 98 to 118 (QLSM…LIGL), 139 to 159 (IPTL…ALGV), and 194 to 214 (ILLF…ALVF).

Belongs to the ATPase A chain family. In terms of assembly, component of the ATP synthase complex composed at least of ATP5F1A/subunit alpha, ATP5F1B/subunit beta, ATP5MC1/subunit c (homooctomer), MT-ATP6/subunit a, MT-ATP8/subunit 8, ATP5ME/subunit e, ATP5MF/subunit f, ATP5MG/subunit g, ATP5MK/subunit k, ATP5MJ/subunit j, ATP5F1C/subunit gamma, ATP5F1D/subunit delta, ATP5F1E/subunit epsilon, ATP5PF/subunit F6, ATP5PB/subunit b, ATP5PD/subunit d, ATP5PO/subunit OSCP. ATP synthase complex consists of a soluble F(1) head domain (subunits alpha(3) and beta(3)) - the catalytic core - and a membrane F(0) domain - the membrane proton channel (subunits c, a, 8, e, f, g, k and j). These two domains are linked by a central stalk (subunits gamma, delta, and epsilon) rotating inside the F1 region and a stationary peripheral stalk (subunits F6, b, d, and OSCP). Interacts with DNAJC30; interaction is direct.

It localises to the mitochondrion inner membrane. The catalysed reaction is H(+)(in) = H(+)(out). Functionally, subunit a, of the mitochondrial membrane ATP synthase complex (F(1)F(0) ATP synthase or Complex V) that produces ATP from ADP in the presence of a proton gradient across the membrane which is generated by electron transport complexes of the respiratory chain. ATP synthase complex consist of a soluble F(1) head domain - the catalytic core - and a membrane F(1) domain - the membrane proton channel. These two domains are linked by a central stalk rotating inside the F(1) region and a stationary peripheral stalk. During catalysis, ATP synthesis in the catalytic domain of F(1) is coupled via a rotary mechanism of the central stalk subunits to proton translocation. With the subunit c (ATP5MC1), forms the proton-conducting channel in the F(0) domain, that contains two crucial half-channels (inlet and outlet) that facilitate proton movement from the mitochondrial intermembrane space (IMS) into the matrix. Protons are taken up via the inlet half-channel and released through the outlet half-channel, following a Grotthuss mechanism. The chain is ATP synthase F(0) complex subunit a from Pelomedusa subrufa (African side-necked turtle).